The chain runs to 292 residues: AKT-interacting protein (292 aa).

The span at 1 to 11 shows a compositional bias: polar residues; that stretch reads MNPLWSMSSGS. Residues 1-64 are disordered; the sequence is MNPLWSMSSG…SPAPAAQSTN (64 aa). Residues 14–23 show a composition bias toward basic and acidic residues; it reads KRAEGEEKTL. The residue at position 30 (Ser30) is a Phosphoserine. One can recognise a UBC core domain in the interval 74-222; sequence YLEYSLLAEF…VVDSVKVCTA (149 aa).

This sequence belongs to the ubiquitin-conjugating enzyme family. FTS subfamily. As to quaternary structure, component of the FTS/Hook/FHIP complex (FHF complex), composed of AKTIP/FTS, FHIP1B, and one or more members of the Hook family of proteins HOOK1, HOOK2, and HOOK3. Interacts directly with HOOK1, HOOK2 and HOOK3. The FHF complex associates with the homotypic vesicular sorting complex (the HOPS complex). Also interacts with AKT1. May interact with FHIP1A.

It localises to the cytoplasm. It is found in the cell membrane. In terms of biological role, component of the FTS/Hook/FHIP complex (FHF complex). The FHF complex may function to promote vesicle trafficking and/or fusion via the homotypic vesicular protein sorting complex (the HOPS complex). Regulates apoptosis by enhancing phosphorylation and activation of AKT1. Increases release of TNFSF6 via the AKT1/GSK3B/NFATC1 signaling cascade. FHF complex promotes the distribution of AP-4 complex to the perinuclear area of the cell. In Rattus norvegicus (Rat), this protein is AKT-interacting protein (Aktip).